Here is a 748-residue protein sequence, read N- to C-terminus: Histone-lysine N-methyltransferase EZH2 (748 aa).

Over residues 183–199 (DYEDDEDGEDNQDDERD) the composition is skewed to acidic residues. 2 disordered regions span residues 183–215 (DYED…KETL) and 347–428 (TPPK…NIEP). Residues 200–215 (DITKDQDDNMEEKETL) are compositionally biased toward basic and acidic residues. Residues 348–359 (PPKRPSGRRRGR) are compositionally biased toward basic residues. Residues 376-387 (EAKDTDSDREAG) show a composition bias toward basic and acidic residues. Residues 505–607 (CRKIQLKKDG…SKNVSCKNCS (103 aa)) enclose the CXC domain. One can recognise an SET domain in the interval 614–729 (KHLLLAPSDV…TGEELFFDYR (116 aa)).

Belongs to the class V-like SAM-binding methyltransferase superfamily. Histone-lysine methyltransferase family. EZ subfamily. In terms of assembly, component of the prc2/eed-ezh2 complex.

Its subcellular location is the nucleus. It catalyses the reaction L-lysyl(27)-[histone H3] + 3 S-adenosyl-L-methionine = N(6),N(6),N(6)-trimethyl-L-lysyl(27)-[histone H3] + 3 S-adenosyl-L-homocysteine + 3 H(+). In terms of biological role, polycomb group (PcG) protein. Catalytic subunit of the prc2/eed-ezh2 complex, which methylates 'Lys-9' and 'Lys-27' of histone H3, leading to transcriptional repression of the affected target gene. May regulate the circadian clock via histone methylation at the promoter of the circadian genes. The polypeptide is Histone-lysine N-methyltransferase EZH2 (ezh2-b) (Xenopus laevis (African clawed frog)).